Reading from the N-terminus, the 492-residue chain is Cysteine--tRNA ligase (492 aa).

A Zn(2+)-binding site is contributed by Cys-27. The 'HIGH' region motif lies at 29–39; sequence VTVYDLCHLGH. The Zn(2+) site is built by Cys-211, His-236, and Glu-240. The 'KMSKS' region motif lies at 268–272; the sequence is KMSKS. Lys-271 serves as a coordination point for ATP.

The protein belongs to the class-I aminoacyl-tRNA synthetase family. As to quaternary structure, monomer. Zn(2+) serves as cofactor.

Its subcellular location is the cytoplasm. The enzyme catalyses tRNA(Cys) + L-cysteine + ATP = L-cysteinyl-tRNA(Cys) + AMP + diphosphate. This is Cysteine--tRNA ligase from Prochlorococcus marinus subsp. pastoris (strain CCMP1986 / NIES-2087 / MED4).